We begin with the raw amino-acid sequence, 174 residues long: MKTVKDYIRTIPDFPEKGIMFRDVTSVIQDADGLKLAIDEMIKRLDGLDFDVIAGAESRGFVFGMPIAYALHKPFVMVRKAGKLPCETVSKTYDLEYGTATIEMHKDSVKPGQKVVLVDDLIATGGTMQAAAELVEELGGEVVKMLFLIELAGLNGRKLLSKYDVDAVVSYDGK.

This sequence belongs to the purine/pyrimidine phosphoribosyltransferase family. As to quaternary structure, homodimer.

It is found in the cytoplasm. The catalysed reaction is AMP + diphosphate = 5-phospho-alpha-D-ribose 1-diphosphate + adenine. It participates in purine metabolism; AMP biosynthesis via salvage pathway; AMP from adenine: step 1/1. Functionally, catalyzes a salvage reaction resulting in the formation of AMP, that is energically less costly than de novo synthesis. The sequence is that of Adenine phosphoribosyltransferase from Agathobacter rectalis (strain ATCC 33656 / DSM 3377 / JCM 17463 / KCTC 5835 / VPI 0990) (Eubacterium rectale).